The chain runs to 503 residues: GMP synthase [glutamine-hydrolyzing] (503 aa).

The Glutamine amidotransferase type-1 domain occupies 1 to 178; it reads MREANVYSEI…LHRAAGIPAD (178 aa). Cys-60 (nucleophile) is an active-site residue. Residues His-152 and Glu-154 contribute to the active site. Residues 179–377 form the GMPS ATP-PPase domain; that stretch reads WNSGNVIADQ…LGLPEVIVGR (199 aa). 206–212 is a binding site for ATP; that stretch reads SGGVDSA.

As to quaternary structure, homodimer.

It catalyses the reaction XMP + L-glutamine + ATP + H2O = GMP + L-glutamate + AMP + diphosphate + 2 H(+). The protein operates within purine metabolism; GMP biosynthesis; GMP from XMP (L-Gln route): step 1/1. Catalyzes the synthesis of GMP from XMP. The polypeptide is GMP synthase [glutamine-hydrolyzing] (Leifsonia xyli subsp. xyli (strain CTCB07)).